A 1031-amino-acid polypeptide reads, in one-letter code: Kinesin heavy chain (1031 aa).

Residues 8–325 (NIKVVCRVRP…LMFGQRAKTI (318 aa)) enclose the Kinesin motor domain. 84–91 (GQTSSGKT) contributes to the ATP binding site. A coiled-coil region spans residues 393–857 (PKQMTVHVSE…RDNADLRCEL (465 aa)). Positions 673–686 (TDQEDKKREEEDKM) are enriched in basic and acidic residues. 2 disordered regions span residues 673-692 (TDQE…ATEM) and 906-1031 (RNFA…EQGS). A globular region spans residues 858–1031 (PKLERRLRAT…PLTTSGEQGS (174 aa)). Residues 932-949 (GSTGIRGGGYSGIRGGGS) show a composition bias toward gly residues. Polar residues-rich tracts occupy residues 964–977 (SHNN…NPND) and 1014–1031 (RNNT…EQGS).

It belongs to the TRAFAC class myosin-kinesin ATPase superfamily. Kinesin family. Kinesin subfamily. As to quaternary structure, oligomer composed of two heavy chains and two light chains.

It localises to the cytoplasm. Its subcellular location is the cytoskeleton. In terms of biological role, kinesin is a microtubule-associated force-producing protein that may play a role in organelle transport. The protein is Kinesin heavy chain of Strongylocentrotus purpuratus (Purple sea urchin).